We begin with the raw amino-acid sequence, 692 residues long: PTS system glucoside-specific EIICBA component (692 aa).

The PTS EIIC type-1 domain occupies 6 to 430; that stretch reads KKFFGQLQRI…LNLKTPGRED (425 aa). The next 10 membrane-spanning stretches (helical) occupy residues 15–35, 84–104, 140–160, 185–205, 215–235, 287–307, 318–338, 344–364, 370–390, and 398–418; these read IGKA…LLTF, LGLA…YLIM, LVLG…IGAL, FVPI…SFVW, LSNF…GIIE, AFTT…AFAI, VVGG…ITEP, LFVA…SFLI, VQIG…GLLS, and LVIP…TFLI. One can recognise a PTS EIIB type-1 domain in the interval 441–522; it reads SELPFEVLEA…QQIMDGKITS (82 aa). Cys-463 (phosphocysteine intermediate; for EIIB activity) is an active-site residue. One can recognise a PTS EIIA type-1 domain in the interval 563-667; that stretch reads DKVFSAKMMG…DTITPIIITN (105 aa). His-615 acts as the Tele-phosphohistidine intermediate; for EIIA activity in catalysis.

It is found in the cell membrane. With respect to regulation, inhibited by methyl alpha-D-glucoside, methyl beta-D-glucoside, p-nitrophenyl alpha-D-glucoside, o-nitrophenyl beta-D-glucoside and salicin, but not by 2-deoxyglucose. The phosphoenolpyruvate-dependent sugar phosphotransferase system (sugar PTS), a major carbohydrate active -transport system, catalyzes the phosphorylation of incoming sugar substrates concomitantly with their translocation across the cell membrane. This system is involved in alpha- and beta-glucoside transport. Can also transport glucose, but not galactose, fructose, mannose, cellobiose, sucrose, maltose, lactose, melibiose and trehalose, as well as N-acetylglucosamine. The chain is PTS system glucoside-specific EIICBA component (glcB) from Staphylococcus carnosus (strain TM300).